The sequence spans 299 residues: ATP phosphoribosyltransferase (299 aa).

It belongs to the ATP phosphoribosyltransferase family. Long subfamily. As to quaternary structure, equilibrium between an active dimeric form, an inactive hexameric form and higher aggregates. Interconversion between the various forms is largely reversible and is influenced by the natural substrates and inhibitors of the enzyme. The cofactor is Mg(2+).

The protein localises to the cytoplasm. The catalysed reaction is 1-(5-phospho-beta-D-ribosyl)-ATP + diphosphate = 5-phospho-alpha-D-ribose 1-diphosphate + ATP. Its pathway is amino-acid biosynthesis; L-histidine biosynthesis; L-histidine from 5-phospho-alpha-D-ribose 1-diphosphate: step 1/9. Its activity is regulated as follows. Feedback inhibited by histidine. In terms of biological role, catalyzes the condensation of ATP and 5-phosphoribose 1-diphosphate to form N'-(5'-phosphoribosyl)-ATP (PR-ATP). Has a crucial role in the pathway because the rate of histidine biosynthesis seems to be controlled primarily by regulation of HisG enzymatic activity. The chain is ATP phosphoribosyltransferase from Escherichia coli O8 (strain IAI1).